The primary structure comprises 563 residues: Urocanate hydratase (563 aa).

NAD(+) is bound by residues 53 to 54, glutamine 131, 177 to 179, glutamate 197, arginine 202, 243 to 244, 264 to 268, 274 to 275, and tyrosine 323; these read GG, GMG, NA, QTSAH, and YL. Cysteine 411 is a catalytic residue. Glycine 493 contacts NAD(+).

It belongs to the urocanase family. NAD(+) serves as cofactor.

The protein localises to the cytoplasm. It carries out the reaction 4-imidazolone-5-propanoate = trans-urocanate + H2O. The protein operates within amino-acid degradation; L-histidine degradation into L-glutamate; N-formimidoyl-L-glutamate from L-histidine: step 2/3. Its function is as follows. Catalyzes the conversion of urocanate to 4-imidazolone-5-propionate. The polypeptide is Urocanate hydratase (Yersinia pestis bv. Antiqua (strain Antiqua)).